We begin with the raw amino-acid sequence, 173 residues long: NADH-ubiquinone oxidoreductase chain 6 (173 aa).

5 helical membrane passes run 1-21 (MTYF…AVAS), 27-47 (YGVV…LSLG), 48-68 (VSFV…VVFV), 87-107 (VVGY…VGGF), and 139-159 (CGVG…FVVL).

It belongs to the complex I subunit 6 family.

Its subcellular location is the mitochondrion membrane. It catalyses the reaction a ubiquinone + NADH + 5 H(+)(in) = a ubiquinol + NAD(+) + 4 H(+)(out). Functionally, core subunit of the mitochondrial membrane respiratory chain NADH dehydrogenase (Complex I) that is believed to belong to the minimal assembly required for catalysis. Complex I functions in the transfer of electrons from NADH to the respiratory chain. The immediate electron acceptor for the enzyme is believed to be ubiquinone. The protein is NADH-ubiquinone oxidoreductase chain 6 (MT-ND6) of Ptychoramphus aleuticus (Cassin's auklet).